A 189-amino-acid chain; its full sequence is Probable RNA 2'-phosphotransferase (189 aa).

Belongs to the KptA/TPT1 family.

In terms of biological role, removes the 2'-phosphate from RNA via an intermediate in which the phosphate is ADP-ribosylated by NAD followed by a presumed transesterification to release the RNA and generate ADP-ribose 1''-2''-cyclic phosphate (APPR&gt;P). May function as an ADP-ribosylase. This Streptomyces griseus subsp. griseus (strain JCM 4626 / CBS 651.72 / NBRC 13350 / KCC S-0626 / ISP 5235) protein is Probable RNA 2'-phosphotransferase.